Reading from the N-terminus, the 66-residue chain is Sodium/potassium-transporting ATPase subunit gamma (66 aa).

Residues 29–46 (GGLIFAGLAFIVGLLILL) form a helical membrane-spanning segment.

Belongs to the FXYD family. Regulatory subunit of the sodium/potassium-transporting ATPase which is composed of a catalytic alpha subunit, an auxiliary non-catalytic beta subunit and an additional regulatory subunit. In terms of tissue distribution, expressed in the distal convoluted tubule in the kidney. Found on basolateral membranes of nephron epithelial cells.

It is found in the membrane. May be involved in forming the receptor site for cardiac glycoside binding or may modulate the transport function of the sodium ATPase. The polypeptide is Sodium/potassium-transporting ATPase subunit gamma (FXYD2) (Homo sapiens (Human)).